The following is a 70-amino-acid chain: Large ribosomal subunit protein bL31 (70 aa).

Cys16, Cys18, Cys38, and Cys41 together coordinate Zn(2+).

This sequence belongs to the bacterial ribosomal protein bL31 family. Type A subfamily. Part of the 50S ribosomal subunit. The cofactor is Zn(2+).

Functionally, binds the 23S rRNA. In Saccharopolyspora erythraea (strain ATCC 11635 / DSM 40517 / JCM 4748 / NBRC 13426 / NCIMB 8594 / NRRL 2338), this protein is Large ribosomal subunit protein bL31.